Consider the following 131-residue polypeptide: POU domain, class 3, transcription factor 3 (131 aa).

The region spanning 1–60 (FTQRRMKLGFTQADVGLALGTLYGNVFSQTTICRFEALQLSFKNMCKLKPLLNKWLEEAD) is the POU-specific domain. Positions 78–131 (KRKKRTSIEVSVKGALESHFLKCPKPSAQEITNLADSLQLEKEVVRVWFCNNLQ) form a DNA-binding region, homeobox.

It belongs to the POU transcription factor family. Class-3 subfamily. As to quaternary structure, homodimer. As to expression, brain.

Its subcellular location is the nucleus. In terms of biological role, transcription factor that acts synergistically with SOX11 and SOX4. Plays a role in neuronal development. Is implicated in an enhancer activity at the embryonic met-mesencephalic junction; the enhancer element contains the octamer motif (5'-ATTTGCAT-3'). This chain is POU domain, class 3, transcription factor 3 (POU3F3), found in Sus scrofa (Pig).